The chain runs to 231 residues: 5'-methylthioadenosine/S-adenosylhomocysteine nucleosidase (231 aa).

The active-site Proton acceptor is the glutamate 12. Residues glycine 78, methionine 153, and 174–175 (ME) contribute to the substrate site. The active-site Proton donor is aspartate 198.

It belongs to the PNP/UDP phosphorylase family. MtnN subfamily.

The enzyme catalyses S-adenosyl-L-homocysteine + H2O = S-(5-deoxy-D-ribos-5-yl)-L-homocysteine + adenine. It carries out the reaction S-methyl-5'-thioadenosine + H2O = 5-(methylsulfanyl)-D-ribose + adenine. It catalyses the reaction 5'-deoxyadenosine + H2O = 5-deoxy-D-ribose + adenine. It functions in the pathway amino-acid biosynthesis; L-methionine biosynthesis via salvage pathway; S-methyl-5-thio-alpha-D-ribose 1-phosphate from S-methyl-5'-thioadenosine (hydrolase route): step 1/2. Functionally, catalyzes the irreversible cleavage of the glycosidic bond in both 5'-methylthioadenosine (MTA) and S-adenosylhomocysteine (SAH/AdoHcy) to adenine and the corresponding thioribose, 5'-methylthioribose and S-ribosylhomocysteine, respectively. Also cleaves 5'-deoxyadenosine, a toxic by-product of radical S-adenosylmethionine (SAM) enzymes, into 5-deoxyribose and adenine. The protein is 5'-methylthioadenosine/S-adenosylhomocysteine nucleosidase of Bacillus cereus (strain G9842).